The primary structure comprises 89 residues: 10 kDa fusion protein (89 aa).

Residues Met-1–Pro-29 form a disordered region. The segment covering Leu-9 to Gly-22 has biased composition (polar residues). Asn-18 is a glycosylation site (N-linked (GlcNAc...) asparagine; by host).

This sequence belongs to the poxviruses fusion protein family. Homotrimer, covalently linked.

It localises to the virion membrane. The sequence is that of 10 kDa fusion protein from Capra hircus (Goat).